Consider the following 286-residue polypeptide: Aquaporin NIP1-3 (286 aa).

The disordered stretch occupies residues Met-1–Asn-44. The segment covering Gln-11–Asn-31 has biased composition (basic and acidic residues). The span at Gln-34 to Asn-44 shows a compositional bias: polar residues. The next 2 helical transmembrane spans lie at Val-56–Val-76 and Val-84–Val-104. Positions Asn-113–Ala-115 match the NPA 1 motif. Helical transmembrane passes span Val-131–Phe-153, Ser-172–Thr-192, and Leu-200–Ser-220. The NPA 2 signature appears at Asn-225–Ala-227. The helical transmembrane segment at Tyr-239–Ala-259 threads the bilayer.

The protein belongs to the MIP/aquaporin (TC 1.A.8) family. NIP (TC 1.A.8.12) subfamily.

It localises to the membrane. Its function is as follows. Aquaporins facilitate the transport of water and small neutral solutes across cell membranes. The sequence is that of Aquaporin NIP1-3 (NIP1-3) from Oryza sativa subsp. japonica (Rice).